A 429-amino-acid polypeptide reads, in one-letter code: Adenylosuccinate synthetase (429 aa).

Residues 12-18 (GDEGKGK) and 40-42 (GHT) each bind GTP. Aspartate 13 acts as the Proton acceptor in catalysis. Aspartate 13 and glycine 40 together coordinate Mg(2+). Residues 13–16 (DEGK), 38–41 (NAGH), threonine 128, arginine 142, glutamine 223, threonine 238, and arginine 302 contribute to the IMP site. The active-site Proton donor is the histidine 41. 298–304 (TTTGRPR) serves as a coordination point for substrate. Residues arginine 304, 330 to 332 (SID), and 412 to 414 (SVG) each bind GTP.

It belongs to the adenylosuccinate synthetase family. In terms of assembly, homodimer. The cofactor is Mg(2+).

Its subcellular location is the cytoplasm. The enzyme catalyses IMP + L-aspartate + GTP = N(6)-(1,2-dicarboxyethyl)-AMP + GDP + phosphate + 2 H(+). Its pathway is purine metabolism; AMP biosynthesis via de novo pathway; AMP from IMP: step 1/2. Functionally, plays an important role in the de novo pathway of purine nucleotide biosynthesis. Catalyzes the first committed step in the biosynthesis of AMP from IMP. This chain is Adenylosuccinate synthetase, found in Bacillus cereus (strain ATCC 14579 / DSM 31 / CCUG 7414 / JCM 2152 / NBRC 15305 / NCIMB 9373 / NCTC 2599 / NRRL B-3711).